The primary structure comprises 97 residues: Large ribosomal subunit protein bL28 (97 aa).

Belongs to the bacterial ribosomal protein bL28 family.

This chain is Large ribosomal subunit protein bL28, found in Rickettsia peacockii (strain Rustic).